We begin with the raw amino-acid sequence, 366 residues long: Aminomethyltransferase (366 aa).

Belongs to the GcvT family. The glycine cleavage system is composed of four proteins: P, T, L and H.

It catalyses the reaction N(6)-[(R)-S(8)-aminomethyldihydrolipoyl]-L-lysyl-[protein] + (6S)-5,6,7,8-tetrahydrofolate = N(6)-[(R)-dihydrolipoyl]-L-lysyl-[protein] + (6R)-5,10-methylene-5,6,7,8-tetrahydrofolate + NH4(+). In terms of biological role, the glycine cleavage system catalyzes the degradation of glycine. This chain is Aminomethyltransferase, found in Bacillus anthracis (strain A0248).